Here is a 1415-residue protein sequence, read N- to C-terminus: DNA-directed RNA polymerase subunit beta' (1415 aa).

Zn(2+) contacts are provided by cysteine 70, cysteine 72, cysteine 85, and cysteine 88. Residues aspartate 461, aspartate 463, and aspartate 465 each coordinate Mg(2+). Positions 820, 894, 901, and 904 each coordinate Zn(2+).

The protein belongs to the RNA polymerase beta' chain family. As to quaternary structure, the RNAP catalytic core consists of 2 alpha, 1 beta, 1 beta' and 1 omega subunit. When a sigma factor is associated with the core the holoenzyme is formed, which can initiate transcription. Mg(2+) serves as cofactor. Requires Zn(2+) as cofactor.

The catalysed reaction is RNA(n) + a ribonucleoside 5'-triphosphate = RNA(n+1) + diphosphate. Its function is as follows. DNA-dependent RNA polymerase catalyzes the transcription of DNA into RNA using the four ribonucleoside triphosphates as substrates. The sequence is that of DNA-directed RNA polymerase subunit beta' from Cupriavidus necator (strain ATCC 17699 / DSM 428 / KCTC 22496 / NCIMB 10442 / H16 / Stanier 337) (Ralstonia eutropha).